Consider the following 1097-residue polypeptide: DNA-directed RNA polymerase subunit beta (1097 aa).

A disordered region spans residues 1073–1097 (DINPRRNTPSRPTYESLGTSEYEED). The segment covering 1077–1091 (RRNTPSRPTYESLGT) has biased composition (polar residues).

The protein belongs to the RNA polymerase beta chain family. In terms of assembly, in cyanobacteria the RNAP catalytic core is composed of 2 alpha, 1 beta, 1 beta', 1 gamma and 1 omega subunit. When a sigma factor is associated with the core the holoenzyme is formed, which can initiate transcription.

The catalysed reaction is RNA(n) + a ribonucleoside 5'-triphosphate = RNA(n+1) + diphosphate. In terms of biological role, DNA-dependent RNA polymerase catalyzes the transcription of DNA into RNA using the four ribonucleoside triphosphates as substrates. This chain is DNA-directed RNA polymerase subunit beta, found in Prochlorococcus marinus (strain MIT 9312).